We begin with the raw amino-acid sequence, 60 residues long: MKNTILILFTAFIALLGFFGMSAEALADPVADPLAGPNAEADPEAINWKGIAAMAKKLLG.

The N-terminal stretch at 1-27 is a signal peptide; sequence MKNTILILFTAFIALLGFFGMSAEALA. AXPX repeat units lie at residues 27-30, 31-34, 35-38, and 41-44; these read ADPV, ADPL, AGPN, and ADPE. A propeptide spanning residues 28–45 is cleaved from the precursor; sequence DPVADPLAGPNAEADPEA. L59 is modified (leucine amide).

This sequence belongs to the MCD family. Mastoparan subfamily. Expressed by the venom gland.

The protein resides in the secreted. The protein localises to the target cell membrane. In terms of biological role, antimicrobial and mast cell degranulating peptide. Has broad spectrum antibacterial activity against both Gram-positive and Gram-negative bacteria (S.aureus MIC=32-64 ug/ml, S.xylosus MIC=3 ug/ml, S.alactolyticus MIC=16 ug/ml, C.koseri MIC=4 ug/ml, E.coli MIC=8 ug/ml, K.pneumoniae MIC=64 ug/ml, P.aerugiosa MIC=256 ug/ml, S.choleraesuis MIC=32 ug/ml, S.typhimurium MIC=32 ug/ml, V.parahamelytics MIC=32 ug/ml). Affects membrane permeability of E.coli. Shows hemolytic activities on sheep, chicken and human erythrocytes. Its mast cell degranulation activity may be related to the activation of G-protein coupled receptors in mast cells as well as interaction with other proteins located in cell endosomal membranes in the mast cells. The polypeptide is Mastoparan-V (Vespa velutina flavitarsus (Asian hornet)).